A 470-amino-acid chain; its full sequence is 63 kDa sperm flagellar membrane protein (470 aa).

An N-terminal signal peptide occupies residues 1–25 (MFCHLHCMLVVFSLLLTLTGSFVNA). The 40-residue stretch at 41–80 (PPDPCASNPCTIASTHCVAAGESHTCECRPGYFETNGNCT) folds into the EGF-like 1 domain. Intrachain disulfides connect Cys-45-Cys-57, Cys-50-Cys-66, and Cys-68-Cys-79. 3 N-linked (GlcNAc...) asparagine glycosylation sites follow: Asn-78, Asn-170, and Asn-219. Residues 81–205 (VAQQFAGSFS…STITVSDFDE (125 aa)) form the SEA domain. The EGF-like 2; calcium-binding domain occupies 202 to 250 (DFDECASADDNDCDPNANCTNTAGSFTCECDTELYDNSPNTEEPGRVCI). Cystine bridges form between Cys-206/Cys-220, Cys-214/Cys-229, Cys-231/Cys-249, Cys-253/Cys-265, Cys-258/Cys-277, and Cys-279/Cys-291. The EGF-like 3 domain maps to 249–292 (CIAPCDPGLCTRPNEICNNGGTIEDDNLCKCIEGYDYTQYGDCD). Residue Asn-322 is glycosylated (N-linked (GlcNAc...) asparagine). Gly-446 carries the GPI-anchor amidated glycine lipid modification. Residues 447–470 (SQRHLPVCGVLSLVVTTLLALMLH) constitute a propeptide, removed in mature form.

In terms of tissue distribution, sperm.

It is found in the cell projection. The protein localises to the cilium. Its subcellular location is the flagellum membrane. This is 63 kDa sperm flagellar membrane protein from Strongylocentrotus purpuratus (Purple sea urchin).